Here is a 258-residue protein sequence, read N- to C-terminus: Proteasome subunit alpha (258 aa).

Belongs to the peptidase T1A family. The 20S proteasome core is composed of 14 alpha and 14 beta subunits that assemble into four stacked heptameric rings, resulting in a barrel-shaped structure. The two inner rings, each composed of seven catalytic beta subunits, are sandwiched by two outer rings, each composed of seven alpha subunits. The catalytic chamber with the active sites is on the inside of the barrel. Has a gated structure, the ends of the cylinder being occluded by the N-termini of the alpha-subunits. Is capped by the proteasome-associated ATPase, ARC.

The protein localises to the cytoplasm. The protein operates within protein degradation; proteasomal Pup-dependent pathway. Its activity is regulated as follows. The formation of the proteasomal ATPase ARC-20S proteasome complex, likely via the docking of the C-termini of ARC into the intersubunit pockets in the alpha-rings, may trigger opening of the gate for substrate entry. Interconversion between the open-gate and close-gate conformations leads to a dynamic regulation of the 20S proteasome proteolysis activity. Component of the proteasome core, a large protease complex with broad specificity involved in protein degradation. The protein is Proteasome subunit alpha of Nocardia farcinica (strain IFM 10152).